The sequence spans 238 residues: Orotidine 5'-phosphate decarboxylase (238 aa).

Residues Asp-10, Lys-32, 59-68 (DLKLHDIPNT), Thr-122, Arg-184, Gln-193, Gly-213, and Arg-214 contribute to the substrate site. Lys-61 functions as the Proton donor in the catalytic mechanism.

It belongs to the OMP decarboxylase family. Type 1 subfamily. Homodimer.

The enzyme catalyses orotidine 5'-phosphate + H(+) = UMP + CO2. The protein operates within pyrimidine metabolism; UMP biosynthesis via de novo pathway; UMP from orotate: step 2/2. In terms of biological role, catalyzes the decarboxylation of orotidine 5'-monophosphate (OMP) to uridine 5'-monophosphate (UMP). This Bacillus cereus (strain AH187) protein is Orotidine 5'-phosphate decarboxylase.